The following is a 562-amino-acid chain: Glycine betaine/proline/choline/ectoine transporter VP1456 (562 aa).

12 helical membrane passes run 68-88, 110-130, 147-167, 203-223, 243-263, 287-307, 322-342, 373-393, 404-424, 456-476, 503-523, and 531-551; these read PVFGISAGLVVFCLISLLLVE, FFMWSTNFFLLFAVGLLFSPL, VSWLSMLFAAGMGIGLLFWSV, WGVHGWSIYALVALALAFFAF, AWGWLGHVIDILAVLSTLFGL, GIGTQMVVIAFVTFIAVLSVV, MIVAFALLIFITFITFDTAMG, WTVFYWAWWVSWSPFVGMFIA, FLFAVIVIPTLVTLVWMSVFG, VLPYSSVISILSIVLILVFFI, IFWACIEGSIAAVMLWVGGKE, and GVVATGLPFTFVLLLMCVSLV.

The protein belongs to the BCCT transporter (TC 2.A.15) family.

It localises to the cell inner membrane. Functionally, involved in the uptake of osmoprotectants. Can transport glycine betaine, proline, choline and ectoine. The protein is Glycine betaine/proline/choline/ectoine transporter VP1456 of Vibrio parahaemolyticus serotype O3:K6 (strain RIMD 2210633).